We begin with the raw amino-acid sequence, 177 residues long: ATP synthase subunit delta (177 aa).

This sequence belongs to the ATPase delta chain family. As to quaternary structure, F-type ATPases have 2 components, F(1) - the catalytic core - and F(0) - the membrane proton channel. F(1) has five subunits: alpha(3), beta(3), gamma(1), delta(1), epsilon(1). F(0) has three main subunits: a(1), b(2) and c(10-14). The alpha and beta chains form an alternating ring which encloses part of the gamma chain. F(1) is attached to F(0) by a central stalk formed by the gamma and epsilon chains, while a peripheral stalk is formed by the delta and b chains.

Its subcellular location is the cell inner membrane. Functionally, f(1)F(0) ATP synthase produces ATP from ADP in the presence of a proton or sodium gradient. F-type ATPases consist of two structural domains, F(1) containing the extramembraneous catalytic core and F(0) containing the membrane proton channel, linked together by a central stalk and a peripheral stalk. During catalysis, ATP synthesis in the catalytic domain of F(1) is coupled via a rotary mechanism of the central stalk subunits to proton translocation. This protein is part of the stalk that links CF(0) to CF(1). It either transmits conformational changes from CF(0) to CF(1) or is implicated in proton conduction. This is ATP synthase subunit delta from Enterobacter sp. (strain 638).